We begin with the raw amino-acid sequence, 87 residues long: MNSLLIITACLFLIGTVWAKEGYLVNKSTGCKYGCLKLGENEGCDKECKAKNQGGSYGYCYAFACWCEGLPESTPTYPLPNKSCSRK.

An N-terminal signal peptide occupies residues 1–19; that stretch reads MNSLLIITACLFLIGTVWA. Positions 20–85 constitute an LCN-type CS-alpha/beta domain; that stretch reads KEGYLVNKST…TYPLPNKSCS (66 aa). Disulfide bonds link Cys-31–Cys-84, Cys-35–Cys-60, Cys-44–Cys-65, and Cys-48–Cys-67.

This sequence belongs to the long (4 C-C) scorpion toxin superfamily. Sodium channel inhibitor family. Beta subfamily. Expressed by the venom gland.

It is found in the secreted. Functionally, beta toxins bind voltage-independently at site-4 of sodium channels (Nav) and shift the voltage of activation toward more negative potentials thereby affecting sodium channel activation and promoting spontaneous and repetitive firing. Induces immediate paralysis in crickets after injection, with a total paralysis occurring within 15-30 minutes and lasting for 1-2 hours. Is also lethal to vertebrate (chicks) when injected in very high dosages (more that 100 mg/kg). The protein is Toxin CsEv2 of Centruroides sculpturatus (Arizona bark scorpion).